The primary structure comprises 456 residues: Glycerol-3-phosphate acyltransferase 4 (456 aa).

The N-terminal stretch at 1 to 37 (MFLLLPFDSLIVNLLGISLTVLFTLLLVFIIVPAIFG) is a signal peptide. Transmembrane regions (helical) follow at residues 156 to 176 (ISLRLTVLWGLGVLIRYCFLL) and 180 to 200 (IALAFTGISLLVVGTTVVGYL). N-linked (GlcNAc...) asparagine glycosylation is present at Asn247. Positions 248-253 (HTSPID) match the HXXXXD motif motif. N-linked (GlcNAc...) asparagine glycans are attached at residues Asn327, Asn328, and Asn362.

It belongs to the 1-acyl-sn-glycerol-3-phosphate acyltransferase family. As to expression, ubiquitous. High levels in testis. Relatively high level of expression in skeletal muscle and heart. Relatively low level of expression in lung.

The protein resides in the endoplasmic reticulum membrane. The catalysed reaction is sn-glycerol 3-phosphate + an acyl-CoA = a 1-acyl-sn-glycero-3-phosphate + CoA. It carries out the reaction dodecanoyl-CoA + sn-glycerol 3-phosphate = 1-dodecanoyl-sn-glycerol 3-phosphate + CoA. The enzyme catalyses sn-glycerol 3-phosphate + hexadecanoyl-CoA = 1-hexadecanoyl-sn-glycero-3-phosphate + CoA. It catalyses the reaction sn-glycerol 3-phosphate + octadecanoyl-CoA = 1-octadecanoyl-sn-glycero-3-phosphate + CoA. The catalysed reaction is sn-glycerol 3-phosphate + (9Z)-octadecenoyl-CoA = 1-(9Z-octadecenoyl)-sn-glycero-3-phosphate + CoA. It carries out the reaction (9Z,12Z)-octadecadienoyl-CoA + sn-glycerol 3-phosphate = 1-(9Z,12Z)-octadecadienoyl-sn-glycero-3-phosphate + CoA. Its pathway is phospholipid metabolism; CDP-diacylglycerol biosynthesis; CDP-diacylglycerol from sn-glycerol 3-phosphate: step 1/3. Inhibited by N-ethylmaleimide (NEM). Its function is as follows. Converts glycerol-3-phosphate to 1-acyl-sn-glycerol-3-phosphate (lysophosphatidic acid or LPA) by incorporating an acyl moiety at the sn-1 position of the glycerol backbone. Active against both saturated and unsaturated long-chain fatty acyl-CoAs. Protects cells against lipotoxicity. The polypeptide is Glycerol-3-phosphate acyltransferase 4 (Homo sapiens (Human)).